Reading from the N-terminus, the 549-residue chain is Glucose-6-phosphate isomerase (549 aa).

Glu-355 (proton donor) is an active-site residue. Residues His-386 and Lys-514 contribute to the active site.

This sequence belongs to the GPI family.

The protein localises to the cytoplasm. The enzyme catalyses alpha-D-glucose 6-phosphate = beta-D-fructose 6-phosphate. The protein operates within carbohydrate biosynthesis; gluconeogenesis. It functions in the pathway carbohydrate degradation; glycolysis; D-glyceraldehyde 3-phosphate and glycerone phosphate from D-glucose: step 2/4. Functionally, catalyzes the reversible isomerization of glucose-6-phosphate to fructose-6-phosphate. The sequence is that of Glucose-6-phosphate isomerase from Cronobacter sakazakii (strain ATCC BAA-894) (Enterobacter sakazakii).